A 40-amino-acid chain; its full sequence is Protamine-2 (40 aa).

The tract at residues 1–40 (MPPRRKRVSSAPRRRRRTYRRTTAHKHQERPVHRRRRRRH) is disordered.

As to expression, testis.

Its subcellular location is the nucleus. The protein resides in the chromosome. Protamines substitute for histones in the chromatin of sperm during the haploid phase of spermatogenesis. They compact sperm DNA into a highly condensed, stable and inactive complex. The sequence is that of Protamine-2 (PBP2) from Bufo japonicus (Japanese common toad).